A 138-amino-acid chain; its full sequence is Superoxide dismutase [Mn] (138 aa).

Histidine 2, histidine 49, aspartate 133, and histidine 137 together coordinate Mn(2+).

Belongs to the iron/manganese superoxide dismutase family. It depends on Mn(2+) as a cofactor.

The enzyme catalyses 2 superoxide + 2 H(+) = H2O2 + O2. In terms of biological role, destroys superoxide anion radicals which are normally produced within the cells and which are toxic to biological systems. The protein is Superoxide dismutase [Mn] (sodA) of Mycobacterium szulgai.